The chain runs to 222 residues: MFRLQLISAFFILLFSLSPVSANFDYFQLVLTWPASFCYPKNKCQRRSNNFTIHGLWPEKKRFRLEFCTGDKYKRFLEEDNIINVLERHWIQMRFDETYANTKQPLWEHEYNRHGICCKNLYDQKAYFLLAMRLKDKLDLLTTLRTHGITPGTKHTFGEIQKAIKTVTSNNDPDLKCVENIKGVMELNEIGICYTPAADRFDRCRHSNTCDETSSTKILFRG.

The signal sequence occupies residues 1-22 (MFRLQLISAFFILLFSLSPVSA). A disulfide bridge links C38 with C44. An N-linked (GlcNAc...) asparagine glycan is attached at N50. Residue H54 is the Proton donor of the active site. RNA-binding positions include H54, 92–93 (QM), 109–110 (HE), and 113–114 (RH). 3 disulfides stabilise this stretch: C68-C117, C177-C210, and C193-C204. The active site involves E110. The active-site Proton acceptor is H114.

This sequence belongs to the RNase T2 family.

It is found in the secreted. The protein resides in the extracellular space. The enzyme catalyses a ribonucleotidyl-ribonucleotide-RNA + H2O = a 3'-end 3'-phospho-ribonucleotide-RNA + a 5'-end dephospho-ribonucleoside-RNA + H(+). Self-incompatibility (SI) is the inherited ability of a flowering plant to prevent self-fertilization by discriminating between self and non-self pollen during pollination. In many species, self-incompatibility is controlled by the single, multiallelic locus S. This chain is Ribonuclease S-3 (S3), found in Petunia hybrida (Petunia).